A 150-amino-acid polypeptide reads, in one-letter code: Deoxyuridine 5'-triphosphate nucleotidohydrolase (150 aa).

Residues 69-71 (RSG), N82, 86-88 (TID), and K96 each bind substrate.

Belongs to the dUTPase family. It depends on Mg(2+) as a cofactor.

It catalyses the reaction dUTP + H2O = dUMP + diphosphate + H(+). The protein operates within pyrimidine metabolism; dUMP biosynthesis; dUMP from dCTP (dUTP route): step 2/2. This enzyme is involved in nucleotide metabolism: it produces dUMP, the immediate precursor of thymidine nucleotides and it decreases the intracellular concentration of dUTP so that uracil cannot be incorporated into DNA. This Aquifex aeolicus (strain VF5) protein is Deoxyuridine 5'-triphosphate nucleotidohydrolase.